Reading from the N-terminus, the 119-residue chain is Small ribosomal subunit protein uS10 (119 aa).

The protein belongs to the universal ribosomal protein uS10 family. As to quaternary structure, component of the small ribosomal subunit. Mature ribosomes consist of a small (40S) and a large (60S) subunit. The 40S subunit contains about 32 different proteins and 1 molecule of RNA (18S). The 60S subunit contains 45 different proteins and 3 molecules of RNA (25S, 5.8S and 5S).

Its subcellular location is the cytoplasm. Its function is as follows. Component of the ribosome, a large ribonucleoprotein complex responsible for the synthesis of proteins in the cell. The small ribosomal subunit (SSU) binds messenger RNAs (mRNAs) and translates the encoded message by selecting cognate aminoacyl-transfer RNA (tRNA) molecules. The large subunit (LSU) contains the ribosomal catalytic site termed the peptidyl transferase center (PTC), which catalyzes the formation of peptide bonds, thereby polymerizing the amino acids delivered by tRNAs into a polypeptide chain. The nascent polypeptides leave the ribosome through a tunnel in the LSU and interact with protein factors that function in enzymatic processing, targeting, and the membrane insertion of nascent chains at the exit of the ribosomal tunnel. In Candida albicans (strain SC5314 / ATCC MYA-2876) (Yeast), this protein is Small ribosomal subunit protein uS10 (RPS20).